Here is a 614-residue protein sequence, read N- to C-terminus: Pyruvate decarboxylase 2 (614 aa).

Substrate is bound by residues Asp-50 and His-137. Residues Asp-415–Ile-523 form a thiamine pyrophosphate binding region. The Mg(2+) site is built by Asp-491, Asn-518, and Gly-520. Substrate is bound at residue Glu-524.

The protein belongs to the TPP enzyme family. As to quaternary structure, homotetramer. A metal cation is required as a cofactor. Thiamine diphosphate serves as cofactor. In terms of tissue distribution, pollen.

The catalysed reaction is a 2-oxocarboxylate + H(+) = an aldehyde + CO2. In Nicotiana tabacum (Common tobacco), this protein is Pyruvate decarboxylase 2 (PDC2).